A 507-amino-acid polypeptide reads, in one-letter code: Cobyric acid synthase (507 aa).

Positions 249-451 constitute a GATase cobBQ-type domain; that stretch reads DIEIAVINLP…IHGIFENREF (203 aa). C330 acts as the Nucleophile in catalysis. H443 is a catalytic residue.

This sequence belongs to the CobB/CobQ family. CobQ subfamily.

It functions in the pathway cofactor biosynthesis; adenosylcobalamin biosynthesis. Functionally, catalyzes amidations at positions B, D, E, and G on adenosylcobyrinic A,C-diamide. NH(2) groups are provided by glutamine, and one molecule of ATP is hydrogenolyzed for each amidation. This chain is Cobyric acid synthase, found in Thermoanaerobacter sp. (strain X514).